A 100-amino-acid polypeptide reads, in one-letter code: Acylphosphatase (100 aa).

An Acylphosphatase-like domain is found at 3 to 92; sequence RRSYSVIGRV…PLPDTFDIRF (90 aa). Active-site residues include Arg18 and Asn36. Positions 76-100 are disordered; the sequence is DDPAHEGPLPDTFDIRFRAPGSASE.

Belongs to the acylphosphatase family.

The enzyme catalyses an acyl phosphate + H2O = a carboxylate + phosphate + H(+). The chain is Acylphosphatase (acyP) from Nitratidesulfovibrio vulgaris (strain ATCC 29579 / DSM 644 / CCUG 34227 / NCIMB 8303 / VKM B-1760 / Hildenborough) (Desulfovibrio vulgaris).